The sequence spans 259 residues: O-antigen export system permease protein RfbA (259 aa).

6 helical membrane passes run 33–53, 73–95, 111–131, 142–162, 176–196, and 228–248; these read FGYL…YFIF, FPWQ…NAQI, VMME…FLFV, WGIP…SIIF, VSLG…SDMI, and EYIS…LAIF. The ABC transmembrane type-2 domain occupies 33–251; the sequence is FGYLWSIANP…IVGLAIFNKL (219 aa).

It belongs to the ABC-2 integral membrane protein family.

It is found in the cell inner membrane. In terms of biological role, may form an ATP-driven O-antigen export apparatus, in association with RfbB. The chain is O-antigen export system permease protein RfbA (rfbA) from Klebsiella pneumoniae.